The following is a 115-amino-acid chain: SPbeta prophage-derived uncharacterized membrane protein YosE (115 aa).

The next 3 helical transmembrane spans lie at 20–42, 58–78, and 95–115; these read IVVG…YGLN, VHVT…FVKG, and GKSL…TLFI.

It localises to the cell membrane. The sequence is that of SPbeta prophage-derived uncharacterized membrane protein YosE (yosE) from Bacillus subtilis (strain 168).